Reading from the N-terminus, the 158-residue chain is Transcription elongation factor GreB (158 aa).

It belongs to the GreA/GreB family. GreB subfamily.

Its function is as follows. Necessary for efficient RNA polymerase transcription elongation past template-encoded arresting sites. The arresting sites in DNA have the property of trapping a certain fraction of elongating RNA polymerases that pass through, resulting in locked ternary complexes. Cleavage of the nascent transcript by cleavage factors such as GreA or GreB allows the resumption of elongation from the new 3'terminus. GreB releases sequences of up to 9 nucleotides in length. This Escherichia coli O157:H7 protein is Transcription elongation factor GreB.